A 399-amino-acid polypeptide reads, in one-letter code: Chalcone synthase 2 (399 aa).

Cys-166 is an active-site residue.

This sequence belongs to the thiolase-like superfamily. Chalcone/stilbene synthases family.

It catalyses the reaction (E)-4-coumaroyl-CoA + 3 malonyl-CoA + 3 H(+) = 2',4,4',6'-tetrahydroxychalcone + 3 CO2 + 4 CoA. Its pathway is secondary metabolite biosynthesis; flavonoid biosynthesis. Functionally, the primary product of this enzyme is 4,2',4',6'-tetrahydroxychalcone (also termed naringenin-chalcone or chalcone) which can under specific conditions spontaneously isomerize into naringenin. Substrate preference is feruloyl-CoA = caffeoyl-CoA &gt;&gt; cinnamoyl-CoA. This is Chalcone synthase 2 (CHS2) from Hordeum vulgare (Barley).